A 372-amino-acid chain; its full sequence is MDYGLDLEYSFNEFLKGFGLSSEIAHIIWLPLPMLLVLVAAVVGVLVTVWLERKISAAAQQRIGPEYAGALGVLQPIADGLKLLVKEDIIPAKADGILFTAGPILVLVPVILSWLIVPFGQNLLISNVGIGIFLWIALSSIQPIGLLMSGYASNNKYSLLGGLRAAAQSISYEIPLALSVLAIVLMTNSLSTIDIVNQQSGAGILSWNIWRQPVGFIVFWICALAECERLPFDLPEAEEELVAGYQTEYAGMKFALFYLGSYINLILSALLVSILYLGGWGFPIPVELIAKFLNLPINAPLIQVFTASIGIVMTVLKAYLLVFIAILLRWTTPRVRIDQLLDLGWKFLLPISLANLLITAGLKLAFPQFFGG.

A run of 8 helical transmembrane segments spans residues 27-47 (IIWLPLPMLLVLVAAVVGVLV), 97-117 (ILFTAGPILVLVPVILSWLIV), 128-148 (VGIGIFLWIALSSIQPIGLLM), 176-196 (LALSVLAIVLMTNSLSTIDIV), 204-224 (ILSWNIWRQPVGFIVFWICAL), 266-286 (ILSALLVSILYLGGWGFPIPV), 308-328 (SIGIVMTVLKAYLLVFIAILL), and 347-367 (FLLPISLANLLITAGLKLAFP).

It belongs to the complex I subunit 1 family. As to quaternary structure, NDH-1 is composed of at least 11 different subunits.

The protein localises to the cellular thylakoid membrane. It catalyses the reaction a plastoquinone + NADH + (n+1) H(+)(in) = a plastoquinol + NAD(+) + n H(+)(out). The enzyme catalyses a plastoquinone + NADPH + (n+1) H(+)(in) = a plastoquinol + NADP(+) + n H(+)(out). NDH-1 shuttles electrons from an unknown electron donor, via FMN and iron-sulfur (Fe-S) centers, to quinones in the respiratory and/or the photosynthetic chain. The immediate electron acceptor for the enzyme in this species is believed to be plastoquinone. Couples the redox reaction to proton translocation, and thus conserves the redox energy in a proton gradient. The sequence is that of NAD(P)H-quinone oxidoreductase subunit 1 from Prochlorococcus marinus (strain MIT 9215).